We begin with the raw amino-acid sequence, 354 residues long: Protein RecA (354 aa).

67–74 provides a ligand contact to ATP; the sequence is GPESSGKT.

It belongs to the RecA family.

The protein resides in the cytoplasm. In terms of biological role, can catalyze the hydrolysis of ATP in the presence of single-stranded DNA, the ATP-dependent uptake of single-stranded DNA by duplex DNA, and the ATP-dependent hybridization of homologous single-stranded DNAs. It interacts with LexA causing its activation and leading to its autocatalytic cleavage. The polypeptide is Protein RecA (Yersinia enterocolitica serotype O:8 / biotype 1B (strain NCTC 13174 / 8081)).